The primary structure comprises 96 residues: UPF0235 protein YggU (96 aa).

It belongs to the UPF0235 family.

In Salmonella typhimurium (strain LT2 / SGSC1412 / ATCC 700720), this protein is UPF0235 protein YggU.